A 192-amino-acid polypeptide reads, in one-letter code: Ion-translocating oxidoreductase complex subunit B (192 aa).

The tract at residues 1 to 26 (MNAIWIAVAAVSLLGLAFGAILGYAS) is hydrophobic. The 60-residue stretch at 32–91 (EDDPVVEKIDEILPQSQCGQCGYPGCRPYAEAISCNGEKINRCAPGGEAVMLKIAELLNV) folds into the 4Fe-4S domain. Residues Cys49, Cys52, Cys57, Cys74, Cys117, Cys120, Cys123, Cys127, Cys147, Cys150, Cys153, and Cys157 each coordinate [4Fe-4S] cluster. 4Fe-4S ferredoxin-type domains are found at residues 108 to 137 (MVAV…GATR) and 138 to 167 (AMHT…LQPV).

This sequence belongs to the 4Fe4S bacterial-type ferredoxin family. RnfB subfamily. In terms of assembly, the complex is composed of six subunits: RsxA, RsxB, RsxC, RsxD, RsxE and RsxG. Requires [4Fe-4S] cluster as cofactor.

Its subcellular location is the cell inner membrane. Its function is as follows. Part of a membrane-bound complex that couples electron transfer with translocation of ions across the membrane. Required to maintain the reduced state of SoxR. This is Ion-translocating oxidoreductase complex subunit B from Shigella dysenteriae serotype 1 (strain Sd197).